Here is a 697-residue protein sequence, read N- to C-terminus: Probable potassium transporter 4 (697 aa).

The Cytoplasmic portion of the chain corresponds to 1–29; the sequence is MSSSHTVTVSMDVEAGQKNKDKKGISQDL. A helical membrane pass occupies residues 30–50; that stretch reads ILAYKTLGVVFGGLVTSPLYV. The Extracellular segment spans residues 51–66; that stretch reads YPSMNLTNPTEEDYLG. The N-linked (GlcNAc...) asparagine glycan is linked to Asn55. The helical transmembrane segment at 67–87 threads the bilayer; it reads IYSIMFWTLTLIGVVKYICIA. The Cytoplasmic portion of the chain corresponds to 88 to 152; sequence LNADDHGEGG…FIESSIIARR (65 aa). A helical transmembrane segment spans residues 153–173; that stretch reads LLLLTAILGMCMLIGDGILTP. Residues 174–189 lie on the Extracellular side of the membrane; the sequence is AISVLSAIDGLRGPFP. Residues 190 to 210 traverse the membrane as a helical segment; it reads SVSKPAVEGLSAAILVGLFLL. At 211–217 the chain is on the cytoplasmic side; it reads QKYGTSK. Residues 218-238 traverse the membrane as a helical segment; the sequence is VSFMFSPIMAAWTFATPVIGV. Topologically, residues 239 to 271 are extracellular; sequence YSIWRYYPGIFKAMSPHYIVRFFMTNQTRGWQL. Residue Asn264 is glycosylated (N-linked (GlcNAc...) asparagine). Residues 272–292 traverse the membrane as a helical segment; sequence LGGTVLCITGAEAMFADLGHF. Over 293–300 the chain is Cytoplasmic; sequence SKRSIQIA. Residues 301–321 traverse the membrane as a helical segment; that stretch reads FMSSIYPSLVLTYAGQTAYLI. Topologically, residues 322–338 are extracellular; it reads NNVDDFSDGFYKFVPRP. Residues 339-359 traverse the membrane as a helical segment; that stretch reads VYWPMFIIATLAAIVASQSLI. The Cytoplasmic portion of the chain corresponds to 360–390; that stretch reads SATFSVIKQSVVLDYFPRVKVVHTSKDKEGE. Residues 391–411 traverse the membrane as a helical segment; that stretch reads VYSPETNYMLMLLCVGVILGF. Topologically, residues 412-422 are extracellular; the sequence is GDGKDIGNAFG. A helical membrane pass occupies residues 423–443; the sequence is VVVILVMLITTILLTLVMLII. Residues 444-447 are Cytoplasmic-facing; sequence WGTH. Residues 448 to 468 traverse the membrane as a helical segment; the sequence is VVLVALYLVPFLLLEATYVSA. Topologically, residues 469 to 475 are extracellular; the sequence is VCTKILR. The chain crosses the membrane as a helical span at residues 476-496; it reads GGWVPFAVSVALAAVMFGWYY. The Cytoplasmic portion of the chain corresponds to 497 to 697; that stretch reads GRQRKTEYEA…RVEIGMLYKA (201 aa).

This sequence belongs to the HAK/KUP transporter (TC 2.A.72.3) family.

The protein resides in the membrane. In terms of biological role, high-affinity potassium transporter. The chain is Probable potassium transporter 4 (HAK4) from Oryza sativa subsp. japonica (Rice).